A 172-amino-acid chain; its full sequence is Small ribosomal subunit protein uS5 (172 aa).

Residues 7-70 (VVEHLVNVNR…QNAKKYMIEV (64 aa)) enclose the S5 DRBM domain.

The protein belongs to the universal ribosomal protein uS5 family. In terms of assembly, part of the 30S ribosomal subunit. Contacts proteins S4 and S8.

Functionally, with S4 and S12 plays an important role in translational accuracy. Its function is as follows. Located at the back of the 30S subunit body where it stabilizes the conformation of the head with respect to the body. This Orientia tsutsugamushi (strain Boryong) (Rickettsia tsutsugamushi) protein is Small ribosomal subunit protein uS5.